The chain runs to 276 residues: Octanoyltransferase LipM (276 aa).

In terms of domain architecture, BPL/LPL catalytic spans 33 to 247 (GELKPTLRFY…GFKDAFSLTF (215 aa)). Catalysis depends on Cys150, which acts as the Acyl-thioester intermediate.

It belongs to the octanoyltransferase LipM family. In terms of assembly, monomer.

It catalyses the reaction octanoyl-[ACP] + L-lysyl-[protein] = N(6)-octanoyl-L-lysyl-[protein] + holo-[ACP] + H(+). Its pathway is protein modification; protein lipoylation via endogenous pathway; protein N(6)-(lipoyl)lysine from octanoyl-[acyl-carrier-protein]. Catalyzes the transfer of endogenously produced octanoic acid from octanoyl-acyl-carrier-protein onto the lipoyl domain of GcvH, an intermediate carrier during protein lipoylation. This is Octanoyltransferase LipM from Exiguobacterium sp. (strain ATCC BAA-1283 / AT1b).